Reading from the N-terminus, the 958-residue chain is UvrABC system protein A (958 aa).

One can recognise an ABC transporter 1 domain in the interval 1–232 (MQSKSIKIQG…IETALKLGEG (232 aa)). Position 33 to 40 (33 to 40 (GLSGSGKS)) interacts with ATP. The segment at 252 to 279 (CPICGFSIGELEPRLFSFNSPFGACPSC) adopts a C4-type zinc-finger fold. 2 ABC transporter domains span residues 315–593 (QYYP…KYLS) and 604–935 (RRKP…GKYL). ATP is bound at residue 639-646 (GVSGSGKS). The segment at 738–764 (CEACRGDGILKIEMHFLPDVYVPCEVC) adopts a C4-type zinc-finger fold.

The protein belongs to the ABC transporter superfamily. UvrA family. Forms a heterotetramer with UvrB during the search for lesions.

Its subcellular location is the cytoplasm. Its function is as follows. The UvrABC repair system catalyzes the recognition and processing of DNA lesions. UvrA is an ATPase and a DNA-binding protein. A damage recognition complex composed of 2 UvrA and 2 UvrB subunits scans DNA for abnormalities. When the presence of a lesion has been verified by UvrB, the UvrA molecules dissociate. The chain is UvrABC system protein A from Oceanobacillus iheyensis (strain DSM 14371 / CIP 107618 / JCM 11309 / KCTC 3954 / HTE831).